Consider the following 569-residue polypeptide: Cytosolic purine 5'-nucleotidase (569 aa).

Asp-52 functions as the Nucleophile in the catalytic mechanism. Residues Asp-52 and Asp-54 each contribute to the IMP site. Residues Asp-52 and Asp-54 each coordinate Mg(2+). Asp-54 acts as the Proton donor in catalysis. Arg-144 and Asn-154 together coordinate ATP. Arg-202, Asp-206, Lys-215, Thr-249, Asn-250, Ser-251, and Lys-292 together coordinate IMP. Asp-351 lines the Mg(2+) pocket. ATP is bound by residues Gln-453 and Arg-456. Residues 527 to 569 (SISEIKPPNLFPQAPQEITHCHDEDDDEEEEEEEVEEEEEEEE) form a disordered region. Residues 548–569 (HDEDDDEEEEEEEVEEEEEEEE) form a required for tetramer assembly region. Positions 550-569 (EDDDEEEEEEEVEEEEEEEE) are enriched in acidic residues.

Belongs to the 5'(3')-deoxyribonucleotidase family. As to quaternary structure, homotetramer. Mg(2+) is required as a cofactor.

It is found in the cytoplasm. Its subcellular location is the cytosol. It carries out the reaction a ribonucleoside 5'-phosphate + H2O = a ribonucleoside + phosphate. It catalyses the reaction a 2'-deoxyribonucleoside + a ribonucleoside 5'-phosphate = a ribonucleoside + a 2'-deoxyribonucleoside 5'-phosphate. The enzyme catalyses IMP + H2O = inosine + phosphate. The catalysed reaction is GMP + H2O = guanosine + phosphate. It carries out the reaction dGMP + H2O = 2'-deoxyguanosine + phosphate. It catalyses the reaction dIMP + H2O = 2'-deoxyinosine + phosphate. The enzyme catalyses XMP + H2O = xanthosine + phosphate. The catalysed reaction is inosine + GMP = guanosine + IMP. It carries out the reaction dGMP + inosine = 2'-deoxyguanosine + IMP. It catalyses the reaction dIMP + inosine = 2'-deoxyinosine + IMP. The enzyme catalyses inosine + UMP = uridine + IMP. The catalysed reaction is inosine + CMP = cytidine + IMP. It carries out the reaction inosine + AMP = IMP + adenosine. Allosterically activated by various compounds including ATP, 2,3-BPG/2,3-Bisphosphoglyceric acid and Ap4A/P1,P4-bis(5'-adenosyl) tetraphosphate. Binding of an allosteric activator is a prerequisiste to magnesium and substrate binding. Inhibited by inorganic phosphate. Inhibited by inosine, guanosine, p-chloromercuribenzoate and NaF. In terms of biological role, broad specificity cytosolic 5'-nucleotidase that catalyzes the dephosphorylation of 6-hydroxypurine nucleoside 5'-monophosphates. In addition, possesses a phosphotransferase activity by which it can transfer a phosphate from a donor nucleoside monophosphate to an acceptor nucleoside, preferably inosine, deoxyinosine and guanosine. Has the highest activities for IMP and GMP followed by dIMP, dGMP and XMP. Could also catalyze the transfer of phosphates from pyrimidine monophosphates but with lower efficiency. Through these activities regulates the purine nucleoside/nucleotide pools within the cell. This Gallus gallus (Chicken) protein is Cytosolic purine 5'-nucleotidase (NT5C2).